The sequence spans 162 residues: Putative ethylene-responsive transcription factor ERF121 (162 aa).

Disordered stretches follow at residues 1 to 21, 84 to 103, and 139 to 162; these read MDYS…PPNL, IKQE…KWSA, and KRSA…GGDD. Residues 87–98 show a composition bias toward basic residues; it reads EKKHKGVRKKPS. Residues 89-146 constitute a DNA-binding region (AP2/ERF); that stretch reads KHKGVRKKPSGKWSAEIWDPSTRTRRWLGTFPTAEMAADAYDEAAAALVEKRSARRGS.

It belongs to the AP2/ERF transcription factor family. ERF subfamily.

The protein localises to the nucleus. In terms of biological role, probably acts as a transcriptional activator. Binds to the GCC-box pathogenesis-related promoter element. May be involved in the regulation of gene expression by stress factors and by components of stress signal transduction pathways. In Arabidopsis thaliana (Mouse-ear cress), this protein is Putative ethylene-responsive transcription factor ERF121 (ERF121).